A 513-amino-acid chain; its full sequence is Serine/threonine protein phosphatase 2A 55 kDa regulatory subunit B alpha isoform (513 aa).

An N-acetylmethionine modification is found at Met-1. WD repeat units follow at residues Gln-36–Gly-75, Glu-112–Ile-153, Ala-232–Asn-270, Asp-281–Ser-321, Glu-340–Ala-378, and Asp-483–Ala-513.

Belongs to the phosphatase 2A regulatory subunit B family. PP2A consists of a common heteromeric enzyme, composed of a catalytic subunit (subunits C), a constant regulatory subunit (subunit A), and a variety of regulatory subunits such as subunits B (the R2/B/PR55/B55, R3/B''/PR72/PR130/PR59 and R5/B'/B56 families). Interacts with SIC/RON3. As to expression, expressed ubiquitously.

Its function is as follows. The B regulatory subunit may modulate substrate selectivity and catalytic activity, and may also direct the localization of the catalytic enzyme to a particular subcellular compartment. This Arabidopsis thaliana (Mouse-ear cress) protein is Serine/threonine protein phosphatase 2A 55 kDa regulatory subunit B alpha isoform (PP2AB1).